The following is a 24-amino-acid chain: Waglerin-4 (24 aa).

Residues Cys-11 and Cys-15 are joined by a disulfide bond.

This sequence belongs to the waglerin family. In terms of assembly, monomer. As to expression, expressed by the venom gland.

It localises to the secreted. Functionally, waglerin-2 selectively blocks the epsilon subunit of muscle nicotinic acetylcholine receptor (nAChR). Also has effects on rodent ionotropic GABA(A) receptors (GABR), since it potentiates I(GABA) in some neurons and depresses I(GABA) in others. In mice, it elicits tachypnea, ocular proptosis, rapid collapse and spasms, whereas no toxic effects on respiration and blood pressure are observed in rats. Waglerin-4 selectively blocks the epsilon subunit of muscle nicotinic acetylcholine receptor. It elicits tachypnea, ocular proptosis, rapid collapse and spasms in mice. It causes death by respiratory failure. This is Waglerin-4 from Tropidolaemus wagleri (Wagler's pit viper).